A 92-amino-acid polypeptide reads, in one-letter code: Large ribosomal subunit protein eL43 (92 aa).

The C4-type zinc finger occupies 39–60; it reads CEFCGKYAVKRKAVGIWGCKAC.

It belongs to the eukaryotic ribosomal protein eL43 family.

This chain is Large ribosomal subunit protein eL43 (RPL37A), found in Gossypium hirsutum (Upland cotton).